A 340-amino-acid chain; its full sequence is Fructose-1,6-bisphosphatase class 1 (340 aa).

Positions 107, 126, 128, and 129 each coordinate Mg(2+). Asn-215 lines the substrate pocket. Mg(2+) is bound at residue Glu-287.

This sequence belongs to the FBPase class 1 family. In terms of assembly, homotetramer. Mg(2+) is required as a cofactor.

Its subcellular location is the cytoplasm. The enzyme catalyses beta-D-fructose 1,6-bisphosphate + H2O = beta-D-fructose 6-phosphate + phosphate. It functions in the pathway carbohydrate biosynthesis; gluconeogenesis. This is Fructose-1,6-bisphosphatase class 1 from Brucella canis (strain ATCC 23365 / NCTC 10854 / RM-666).